A 206-amino-acid polypeptide reads, in one-letter code: NADH-quinone oxidoreductase subunit C (206 aa).

This sequence belongs to the complex I 30 kDa subunit family. As to quaternary structure, NDH-1 is composed of 14 different subunits. Subunits NuoB, C, D, E, F, and G constitute the peripheral sector of the complex.

It localises to the cell inner membrane. The enzyme catalyses a quinone + NADH + 5 H(+)(in) = a quinol + NAD(+) + 4 H(+)(out). NDH-1 shuttles electrons from NADH, via FMN and iron-sulfur (Fe-S) centers, to quinones in the respiratory chain. The immediate electron acceptor for the enzyme in this species is believed to be ubiquinone. Couples the redox reaction to proton translocation (for every two electrons transferred, four hydrogen ions are translocated across the cytoplasmic membrane), and thus conserves the redox energy in a proton gradient. The protein is NADH-quinone oxidoreductase subunit C of Bordetella avium (strain 197N).